We begin with the raw amino-acid sequence, 214 residues long: Cell division protein SepF (214 aa).

The segment at 25 to 51 (EDDDRGARAGGYSRRPREDRFEEEAYG) is disordered.

The protein belongs to the SepF family. Homodimer. Interacts with FtsZ.

The protein localises to the cytoplasm. In terms of biological role, cell division protein that is part of the divisome complex and is recruited early to the Z-ring. Probably stimulates Z-ring formation, perhaps through the cross-linking of FtsZ protofilaments. Its function overlaps with FtsA. The chain is Cell division protein SepF from Mycolicibacterium smegmatis (strain ATCC 700084 / mc(2)155) (Mycobacterium smegmatis).